A 404-amino-acid polypeptide reads, in one-letter code: Argininosuccinate synthase (404 aa).

Residues 12–20 (AYSGGLDTS) and alanine 39 each bind ATP. The L-citrulline site is built by tyrosine 90 and serine 95. Glycine 120 serves as a coordination point for ATP. 3 residues coordinate L-aspartate: threonine 122, asparagine 126, and aspartate 127. L-citrulline is bound at residue asparagine 126. L-citrulline-binding residues include arginine 130, serine 181, serine 190, glutamate 266, and tyrosine 278.

Belongs to the argininosuccinate synthase family. Type 1 subfamily. As to quaternary structure, homotetramer.

It is found in the cytoplasm. It carries out the reaction L-citrulline + L-aspartate + ATP = 2-(N(omega)-L-arginino)succinate + AMP + diphosphate + H(+). Its pathway is amino-acid biosynthesis; L-arginine biosynthesis; L-arginine from L-ornithine and carbamoyl phosphate: step 2/3. The sequence is that of Argininosuccinate synthase from Rhodospirillum rubrum (strain ATCC 11170 / ATH 1.1.1 / DSM 467 / LMG 4362 / NCIMB 8255 / S1).